Reading from the N-terminus, the 131-residue chain is Antitoxin MqsA (131 aa).

Zn(2+) contacts are provided by C3, C6, C37, and C40. The 54-residue stretch at I74 to L127 folds into the HTH cro/C1-type domain. A DNA-binding region (H-T-H motif) is located at residues Q85–K104.

In terms of assembly, homodimer. Crystallizes as a heterotetramer with MqsA, MqsR-MqsA(2)-MqsR. Purifies as a probable heterohexamer of 2 MqsR dimers and 1 MqsA dimer. Binds promoter DNA as a dimer. When the 2 dissociate the MsqR mRNA interferase becomes active. It depends on Zn(2+) as a cofactor. Post-translationally, degraded in the presence of oxidative stress, maybe by the Lon and/or ClpX proteases.

Functionally, antitoxin component of a type II toxin-antitoxin (TA) system. Labile antitoxin that binds to the MqsR mRNA interferase toxin and neutralizes its endoribonuclease activity. Overexpression prevents MqsR-mediated cessation of cell growth and inhibition of cell proliferation. Initially reported to act as a cotranscription factor with MqsA. Following further experiments, the MqsR-MqsA complex does not bind DNA and all reported data are actually due to a small fraction of free MqsA alone binding DNA. Addition of MqsR to a preformed MqsA-promoter DNA complex causes dissociation of the MqsA-DNA complex, probably causing derepression of MqsA-repressed transcripts. MqsA binds to 2 palindromes in the promoter region of the mqsRA operon activating its transcription. Binds to other promoters, inducing mcbR and spy and repressing cspD among others. Binds to and represses the rpoS promoter, the master stress regulator, resulting in decreased cyclic-di-GMP, reduced stress resistance, increased cell motility and decreased biofilm formation; in these experiments 5 TA systems are missing (lacks MazEF, RelEB, ChpB, YoeB-YefM, YafQ-DinJ). An earlier study showed overexpression alone increases biofilm formation, perhaps by repressing cspD; in these experiments the 5 TA systems are present. Represses the csgD promoter. In the presence of stress, when this protein is degraded, the promoters it represses are derepressed, leading to biofilm formation. This TA system mediates cell growth during bile acid deoxycholate stress by degrading mRNA for probable deoxycholate-binding protein YgiS; bile acid detergents such as deoxycholate are important for host defense against bacterial growth in the gall bladder and duodenum. This Escherichia coli (strain K12) protein is Antitoxin MqsA.